The chain runs to 438 residues: ATP-dependent RNA helicase SUB2 (438 aa).

Residues 1-19 (MSHEGEEDLLEYSDNEQEI) show a composition bias toward acidic residues. Positions 1–44 (MSHEGEEDLLEYSDNEQEIQVDNTKATEVAGNGEEAADGKDGDK) are disordered. The short motif at 54–82 (TGFKDFLLKPELSRAIIDCGFEHPSEVQQ) is the Q motif element. The Helicase ATP-binding domain occupies 85–260 (IPQSIHGTDV…RRFLQNPLEI (176 aa)). Residue 98–105 (AKSGLGKT) coordinates ATP. Residues 207 to 210 (DECD) carry the DECD box motif. The Helicase C-terminal domain occupies 272–433 (GLQQYYIRLE…EFPEEGVDPS (162 aa)).

Belongs to the DEAD box helicase family. DECD subfamily.

The protein localises to the nucleus. It carries out the reaction ATP + H2O = ADP + phosphate + H(+). Its function is as follows. ATP-binding RNA helicase involved in transcription elongation and required for the export of mRNA out of the nucleus. SUB2 also plays a role in pre-mRNA splicing and spliceosome assembly. May be involved in rDNA and telomeric silencing, and maintenance of genome integrity. This chain is ATP-dependent RNA helicase SUB2 (SUB2), found in Eremothecium gossypii (strain ATCC 10895 / CBS 109.51 / FGSC 9923 / NRRL Y-1056) (Yeast).